A 503-amino-acid chain; its full sequence is MTAVADRSLGPELARTETLGPDTDVLVIGLTSSENGPSIAPDDMFGDVLTEDVRAELLDQLGAVGAKGKAEELTRVPAPAALEGVTSVLAVGLGAPDKLDAEQLRRSAGVAARSLTGTEVVATTLGGIDIAAAAEGFYLGAYTFTPFRSAKSAPKPDERPVAKVEFLVPTADFGEEALFRAQLVAEAVATARDFVNTPPSHLYPAEFAARTQVLAEAAGLDVEVLDENALEAGGYGGVLGVGKGSSRPPRLVRLTYAGGPKKVALIGKGVTFDTGGISIKPAQNMENMTSDMAGAAAVIATTLLAARLSLPITVTATVPMAENMPSATAQRPGDVLTQYGGTTVEVLNTDAEGRLILADAIVRAGEDSPEFLIDVATLTGAQMVALGTRTPGVMGTDEFRDRVARISQEVGENGWPMPLPAELRADLNSKIADLANVAPHRWGGMLSAGLFLREFVPEGVQWAHLDVAGPAYNTGGPFGYIGKGGTGVPVRTLIAVLEDIAAE.

Positions 268 and 273 each coordinate Mn(2+). Residue Lys-280 is part of the active site. Mn(2+) is bound by residues Asp-291, Asp-350, and Glu-352. Arg-354 is a catalytic residue.

This sequence belongs to the peptidase M17 family. Requires Mn(2+) as cofactor.

It is found in the cytoplasm. It carries out the reaction Release of an N-terminal amino acid, Xaa-|-Yaa-, in which Xaa is preferably Leu, but may be other amino acids including Pro although not Arg or Lys, and Yaa may be Pro. Amino acid amides and methyl esters are also readily hydrolyzed, but rates on arylamides are exceedingly low.. It catalyses the reaction Release of an N-terminal amino acid, preferentially leucine, but not glutamic or aspartic acids.. In terms of biological role, presumably involved in the processing and regular turnover of intracellular proteins. Catalyzes the removal of unsubstituted N-terminal amino acids from various peptides. The chain is Probable cytosol aminopeptidase from Nocardia farcinica (strain IFM 10152).